A 113-amino-acid polypeptide reads, in one-letter code: MDTTIDDLATKQCKPCEGAMPPLSQEEITQLMRQLDGWNYLGKTIRKEFSFKNYYQTMAFVNAVAWISHREDHHPDITVGYNKCQVEYTTHAIGGLSENDFICAAKIDTLFQI.

It belongs to the pterin-4-alpha-carbinolamine dehydratase family.

It carries out the reaction (4aS,6R)-4a-hydroxy-L-erythro-5,6,7,8-tetrahydrobiopterin = (6R)-L-erythro-6,7-dihydrobiopterin + H2O. This Nitrosospira multiformis (strain ATCC 25196 / NCIMB 11849 / C 71) protein is Putative pterin-4-alpha-carbinolamine dehydratase.